The sequence spans 540 residues: CBL-interacting protein kinase 12 (540 aa).

The interval 1–23 is disordered; sequence MLMATVSPARREPTPQAVRASPM. A Protein kinase domain is found at 46–300; the sequence is YELGRVLGQG…VPEIIESDWF (255 aa). ATP is bound by residues 52 to 60 and Lys-75; that span reads LGQGSFAKV. The active-site Proton acceptor is Asp-168. The interval 186–215 is activation loop; sequence DFGLAAGPDQFDPDGLLHTFCGTPAYVAPE. The span at 333–348 shows a compositional bias: pro residues; that stretch reads PPPLGLAPPVPPPPQG. The disordered stretch occupies residues 333 to 380; sequence PPPLGLAPPVPPPPQGDDPDGSGSESDSSVVSCPATLSTGESQRVRGS. A compositionally biased stretch (low complexity) spans 353–364; sequence GSGSESDSSVVS. Residues 370–406 form the NAF domain; it reads STGESQRVRGSLPRPASLNAFDIISFSKGFNLSGLFE. The interval 409–438 is PPI; it reads GNEIRFVSGEPMSDIVKKLEEIAKVKSFTV.

This sequence belongs to the protein kinase superfamily. CAMK Ser/Thr protein kinase family. SNF1 subfamily. Mg(2+) serves as cofactor. Autophosphorylated. Expressed at low levels in leaf blades.

It catalyses the reaction L-seryl-[protein] + ATP = O-phospho-L-seryl-[protein] + ADP + H(+). The enzyme catalyses L-threonyl-[protein] + ATP = O-phospho-L-threonyl-[protein] + ADP + H(+). In terms of biological role, involved in drought stress tolerance. CIPK serine-threonine protein kinases interact with CBL proteins. Binding of a CBL protein to the regulatory NAF domain of CIPK protein lead to the activation of the kinase in a calcium-dependent manner. This is CBL-interacting protein kinase 12 (CIPK12) from Oryza sativa subsp. japonica (Rice).